A 1034-amino-acid chain; its full sequence is Receptor-type guanylate cyclase gcy-25 (1034 aa).

Positions 1–16 (MLLLLLLLKISTFVDS) are cleaved as a signal peptide. Residues 17-409 (FQIGHLEFEN…YDNNLCSDFH (393 aa)) are Extracellular-facing. 5 N-linked (GlcNAc...) asparagine glycosylation sites follow: N28, N224, N301, N308, and N373. Residues 410 to 430 (VFMIAAIVFSILLIPMAIAFY) traverse the membrane as a helical segment. Residues 431–1034 (LQRKEHLIQQ…DNSKKMFLNV (604 aa)) are Cytoplasmic-facing. The 286-residue stretch at 464–749 (RVSTISTARA…KITDAVNREF (286 aa)) folds into the Protein kinase domain. ATP contacts are provided by residues 470–478 (TARASYSSI) and K497. Residues 758 to 785 (IDQMIEMIDEYSANLEQIVAERTRELEQ) adopt a coiled-coil conformation. A Guanylate cyclase domain is found at 821–951 (TLLVVDVCQF…DTVNMACRMA (131 aa)).

This sequence belongs to the adenylyl cyclase class-4/guanylyl cyclase family. Expressed in AQR, PQR and URX sensory neurons.

Its subcellular location is the cell membrane. The enzyme catalyses GTP = 3',5'-cyclic GMP + diphosphate. Guanylate cyclase involved in the production of the second messenger cGMP. This is Receptor-type guanylate cyclase gcy-25 from Caenorhabditis elegans.